The sequence spans 259 residues: 3-deoxy-manno-octulosonate cytidylyltransferase (259 aa).

The protein belongs to the KdsB family.

Its subcellular location is the cytoplasm. The enzyme catalyses 3-deoxy-alpha-D-manno-oct-2-ulosonate + CTP = CMP-3-deoxy-beta-D-manno-octulosonate + diphosphate. Its pathway is nucleotide-sugar biosynthesis; CMP-3-deoxy-D-manno-octulosonate biosynthesis; CMP-3-deoxy-D-manno-octulosonate from 3-deoxy-D-manno-octulosonate and CTP: step 1/1. It functions in the pathway bacterial outer membrane biogenesis; lipopolysaccharide biosynthesis. Activates KDO (a required 8-carbon sugar) for incorporation into bacterial lipopolysaccharide in Gram-negative bacteria. The chain is 3-deoxy-manno-octulosonate cytidylyltransferase from Protochlamydia amoebophila (strain UWE25).